The sequence spans 476 residues: Aspartyl/glutamyl-tRNA(Asn/Gln) amidotransferase subunit B (476 aa).

It belongs to the GatB/GatE family. GatB subfamily. As to quaternary structure, heterotrimer of A, B and C subunits.

The catalysed reaction is L-glutamyl-tRNA(Gln) + L-glutamine + ATP + H2O = L-glutaminyl-tRNA(Gln) + L-glutamate + ADP + phosphate + H(+). It carries out the reaction L-aspartyl-tRNA(Asn) + L-glutamine + ATP + H2O = L-asparaginyl-tRNA(Asn) + L-glutamate + ADP + phosphate + 2 H(+). In terms of biological role, allows the formation of correctly charged Asn-tRNA(Asn) or Gln-tRNA(Gln) through the transamidation of misacylated Asp-tRNA(Asn) or Glu-tRNA(Gln) in organisms which lack either or both of asparaginyl-tRNA or glutaminyl-tRNA synthetases. The reaction takes place in the presence of glutamine and ATP through an activated phospho-Asp-tRNA(Asn) or phospho-Glu-tRNA(Gln). The sequence is that of Aspartyl/glutamyl-tRNA(Asn/Gln) amidotransferase subunit B from Neisseria meningitidis serogroup C (strain 053442).